A 177-amino-acid polypeptide reads, in one-letter code: Large ribosomal subunit protein uL5 (177 aa).

Belongs to the universal ribosomal protein uL5 family. As to quaternary structure, part of the 50S ribosomal subunit. Interacts with protein L18 and the 5S rRNA, and probably with tRNAs. Forms a bridge to the 30S subunit in the 70S ribosome.

This is 1 of 5 proteins that mediates the attachment of the 5S rRNA onto the large ribosomal subunit, stabilizing the orientation of adjacent RNA domains. Forms part of the central protuberance. Modeling places the A and P site tRNAs in close proximity to this protein; the 5S rRNA and some of its associated proteins might help stabilize positioning of ribosome-bound tRNAs. In the 70S ribosome it is thought to contact protein S13 of the 30S subunit (bridge B1b), connecting the 2 subunits; this bridge is implicated in subunit movement. In Haloarcula marismortui (strain ATCC 43049 / DSM 3752 / JCM 8966 / VKM B-1809) (Halobacterium marismortui), this protein is Large ribosomal subunit protein uL5 (rpl5).